Reading from the N-terminus, the 158-residue chain is Large ribosomal subunit protein mL50 (158 aa).

It belongs to the mitochondrion-specific ribosomal protein mL50 family. In terms of assembly, component of the mitochondrial ribosome large subunit (39S) which comprises a 16S rRNA and about 50 distinct proteins.

It is found in the mitochondrion. The sequence is that of Large ribosomal subunit protein mL50 (MRPL50) from Pongo abelii (Sumatran orangutan).